The chain runs to 293 residues: Epidermal growth factor-like protein 8 (293 aa).

The first 25 residues, 1–25, serve as a signal peptide directing secretion; the sequence is MGSRAELCTLLGGFSFLLLLIPGEG. One can recognise an EMI domain in the interval 34–112; sequence SQGVCSKQTL…RHPGALTCEA (79 aa). 9 disulfide bridges follow: C38–C97, C65–C71, C96–C110, C114–C124, C118–C130, C132–C141, C148–C159, C155–C168, and C170–C183. An N-linked (GlcNAc...) asparagine glycan is attached at N50. In terms of domain architecture, EGF-like 1 spans 111 to 142; sequence EAICAKPCLNGGVCVRPDQCECAPGWGGKHCH. Residues 144–184 form the EGF-like 2; calcium-binding domain; that stretch reads DVDECRTSITLCSHHCFNTAGSFTCGCPHDLVLGVDGRTCM. A coiled-coil region spans residues 195–232; sequence SILSVAVREAEKDERALKQEIHELRGRLERLEQWAGQA.

The protein localises to the secreted. The polypeptide is Epidermal growth factor-like protein 8 (EGFL8) (Homo sapiens (Human)).